A 250-amino-acid chain; its full sequence is Cell division protein ZapD (250 aa).

The protein belongs to the ZapD family. Interacts with FtsZ.

The protein resides in the cytoplasm. Cell division factor that enhances FtsZ-ring assembly. Directly interacts with FtsZ and promotes bundling of FtsZ protofilaments, with a reduction in FtsZ GTPase activity. This is Cell division protein ZapD from Yersinia pestis bv. Antiqua (strain Antiqua).